The sequence spans 578 residues: Isocitrate dehydrogenase kinase/phosphatase (578 aa).

ATP-binding positions include A315–M321 and K336. D371 is a catalytic residue.

This sequence belongs to the AceK family.

It is found in the cytoplasm. The catalysed reaction is L-seryl-[isocitrate dehydrogenase] + ATP = O-phospho-L-seryl-[isocitrate dehydrogenase] + ADP + H(+). In terms of biological role, bifunctional enzyme which can phosphorylate or dephosphorylate isocitrate dehydrogenase (IDH) on a specific serine residue. This is a regulatory mechanism which enables bacteria to bypass the Krebs cycle via the glyoxylate shunt in response to the source of carbon. When bacteria are grown on glucose, IDH is fully active and unphosphorylated, but when grown on acetate or ethanol, the activity of IDH declines drastically concomitant with its phosphorylation. The protein is Isocitrate dehydrogenase kinase/phosphatase of Escherichia coli O139:H28 (strain E24377A / ETEC).